Consider the following 176-residue polypeptide: Lipoprotein signal peptidase (176 aa).

Transmembrane regions (helical) follow at residues 26–46 (LWLAFALLVVLLDQFFKIVIV), 57–77 (VTGFFNLVLVYNKGAAFSFLA), 82–102 (WQRWFFTGLGVVVGAFIVWLL), and 111–131 (FCFAVSLILGGAVGNVVDRVI). Residues Asp137 and Asp155 contribute to the active site. Residues 147–167 (HWPAFNVADCAITVGAVLLIV) traverse the membrane as a helical segment.

Belongs to the peptidase A8 family.

It localises to the cell inner membrane. It carries out the reaction Release of signal peptides from bacterial membrane prolipoproteins. Hydrolyzes -Xaa-Yaa-Zaa-|-(S,diacylglyceryl)Cys-, in which Xaa is hydrophobic (preferably Leu), and Yaa (Ala or Ser) and Zaa (Gly or Ala) have small, neutral side chains.. The protein operates within protein modification; lipoprotein biosynthesis (signal peptide cleavage). Its function is as follows. This protein specifically catalyzes the removal of signal peptides from prolipoproteins. The protein is Lipoprotein signal peptidase of Cupriavidus taiwanensis (strain DSM 17343 / BCRC 17206 / CCUG 44338 / CIP 107171 / LMG 19424 / R1) (Ralstonia taiwanensis (strain LMG 19424)).